The chain runs to 189 residues: Probable nicotinate-nucleotide adenylyltransferase (189 aa).

Belongs to the NadD family.

It carries out the reaction nicotinate beta-D-ribonucleotide + ATP + H(+) = deamido-NAD(+) + diphosphate. It functions in the pathway cofactor biosynthesis; NAD(+) biosynthesis; deamido-NAD(+) from nicotinate D-ribonucleotide: step 1/1. Catalyzes the reversible adenylation of nicotinate mononucleotide (NaMN) to nicotinic acid adenine dinucleotide (NaAD). This chain is Probable nicotinate-nucleotide adenylyltransferase, found in Ruegeria sp. (strain TM1040) (Silicibacter sp.).